The following is a 185-amino-acid chain: Ribosome-recycling factor (185 aa).

Residues 137-162 are disordered; it reads DSIDKMVKDGEVGEDEGRRAEKELDD.

The protein belongs to the RRF family.

It localises to the cytoplasm. Responsible for the release of ribosomes from messenger RNA at the termination of protein biosynthesis. May increase the efficiency of translation by recycling ribosomes from one round of translation to another. In Streptomyces coelicolor (strain ATCC BAA-471 / A3(2) / M145), this protein is Ribosome-recycling factor.